We begin with the raw amino-acid sequence, 122 residues long: uncharacterized protein (122 aa).

A signal peptide spans 1 to 35 (MCCYVGKATKIFLCLAAALIVVGLVLGFGLAHRTW). A disordered region spans residues 55 to 83 (YGGGGGGGDPLPATSGAGDTPPGVPLTEP).

This is an uncharacterized protein from Oryza sativa subsp. japonica (Rice).